A 298-amino-acid polypeptide reads, in one-letter code: Acetyl-coenzyme A carboxylase carboxyl transferase subunit beta (298 aa).

Residues 41–298 (PTIECPECHA…RIVSKLMNLP (258 aa)) form the CoA carboxyltransferase N-terminal domain. Positions 45, 48, 64, and 67 each coordinate Zn(2+). Residues 45–67 (CPECHALVTRTAIAFNAYVCPSC) form a C4-type zinc finger.

Belongs to the AccD/PCCB family. In terms of assembly, acetyl-CoA carboxylase is a heterohexamer composed of biotin carboxyl carrier protein (AccB), biotin carboxylase (AccC) and two subunits each of ACCase subunit alpha (AccA) and ACCase subunit beta (AccD). Zn(2+) is required as a cofactor.

Its subcellular location is the cytoplasm. It catalyses the reaction N(6)-carboxybiotinyl-L-lysyl-[protein] + acetyl-CoA = N(6)-biotinyl-L-lysyl-[protein] + malonyl-CoA. The protein operates within lipid metabolism; malonyl-CoA biosynthesis; malonyl-CoA from acetyl-CoA: step 1/1. Functionally, component of the acetyl coenzyme A carboxylase (ACC) complex. Biotin carboxylase (BC) catalyzes the carboxylation of biotin on its carrier protein (BCCP) and then the CO(2) group is transferred by the transcarboxylase to acetyl-CoA to form malonyl-CoA. The protein is Acetyl-coenzyme A carboxylase carboxyl transferase subunit beta of Acinetobacter baylyi (strain ATCC 33305 / BD413 / ADP1).